We begin with the raw amino-acid sequence, 349 residues long: Dihydroorotate dehydrogenase (quinone) (349 aa).

FMN is bound by residues alanine 65 to lysine 69 and alanine 89. Residue lysine 69 participates in substrate binding. Asparagine 114–phenylalanine 118 contributes to the substrate binding site. Asparagine 143 and asparagine 176 together coordinate FMN. Asparagine 176 lines the substrate pocket. Serine 179 serves as the catalytic Nucleophile. Asparagine 181 provides a ligand contact to substrate. 2 residues coordinate FMN: lysine 212 and threonine 240. Asparagine 241–threonine 242 contacts substrate. Residues threonine 244–proline 265 are disordered. The span at glutamate 245–alanine 255 shows a compositional bias: basic and acidic residues. Residues glycine 263, glycine 290, and tyrosine 311–threonine 312 each bind FMN.

The protein belongs to the dihydroorotate dehydrogenase family. Type 2 subfamily. Monomer. FMN serves as cofactor.

It is found in the cell membrane. It catalyses the reaction (S)-dihydroorotate + a quinone = orotate + a quinol. It functions in the pathway pyrimidine metabolism; UMP biosynthesis via de novo pathway; orotate from (S)-dihydroorotate (quinone route): step 1/1. In terms of biological role, catalyzes the conversion of dihydroorotate to orotate with quinone as electron acceptor. In Halobacterium salinarum (strain ATCC 29341 / DSM 671 / R1), this protein is Dihydroorotate dehydrogenase (quinone).